A 316-amino-acid chain; its full sequence is Acetylglutamate kinase (316 aa).

Residues 65-66, Arg87, and Asn179 each bind substrate; that span reads GG.

The protein belongs to the acetylglutamate kinase family. ArgB subfamily.

Its subcellular location is the cytoplasm. It carries out the reaction N-acetyl-L-glutamate + ATP = N-acetyl-L-glutamyl 5-phosphate + ADP. Its pathway is amino-acid biosynthesis; L-arginine biosynthesis; N(2)-acetyl-L-ornithine from L-glutamate: step 2/4. In terms of biological role, catalyzes the ATP-dependent phosphorylation of N-acetyl-L-glutamate. This is Acetylglutamate kinase from Alkaliphilus metalliredigens (strain QYMF).